Consider the following 514-residue polypeptide: Maturase K (514 aa).

It belongs to the intron maturase 2 family. MatK subfamily.

The protein resides in the plastid. Its subcellular location is the chloroplast. Usually encoded in the trnK tRNA gene intron. Probably assists in splicing its own and other chloroplast group II introns. This is Maturase K from Encephalartos altensteinii (Altenstein's bread tree).